The chain runs to 246 residues: Probable transcriptional regulatory protein CLL_A1008 (246 aa).

It belongs to the TACO1 family.

It localises to the cytoplasm. The protein is Probable transcriptional regulatory protein CLL_A1008 of Clostridium botulinum (strain Eklund 17B / Type B).